The primary structure comprises 729 residues: Polyribonucleotide nucleotidyltransferase (729 aa).

Positions 485 and 491 each coordinate Mg(2+). The KH domain maps to 552-611 (PRITTMKVAEDKIRTIIGKGGATIKGLIESTGVSIDIDDSGVIQLFSPDKMALEEAQKQI). The 69-residue stretch at 621-689 (GQTYQGKVSK…KQGRVKLEWK (69 aa)) folds into the S1 motif domain.

The protein belongs to the polyribonucleotide nucleotidyltransferase family. As to quaternary structure, component of the RNA degradosome, which is a multiprotein complex involved in RNA processing and mRNA degradation. Mg(2+) is required as a cofactor.

It is found in the cytoplasm. It carries out the reaction RNA(n+1) + phosphate = RNA(n) + a ribonucleoside 5'-diphosphate. Involved in mRNA degradation. Catalyzes the phosphorolysis of single-stranded polyribonucleotides processively in the 3'- to 5'-direction. The polypeptide is Polyribonucleotide nucleotidyltransferase (Legionella pneumophila (strain Corby)).